The primary structure comprises 773 residues: Leucine-rich repeat and calponin homology domain-containing protein 2 (773 aa).

Residues M1 to G46 form a disordered region. 9 LRR repeats span residues N97–L118, D120–F141, P143–L164, M166–L187, P188–L209, D211–L232, S234–P256, L257–L277, and H279–K300. Disordered stretches follow at residues L324 to Q409, F438 to V478, and K573 to E633. 2 stretches are compositionally biased toward basic and acidic residues: residues S386–S396 and K440–L466. The span at A594–S603 shows a compositional bias: polar residues. Residues L650–P763 form the Calponin-homology (CH) domain.

Its function is as follows. May play a role in the organization of the cytoskeleton. The sequence is that of Leucine-rich repeat and calponin homology domain-containing protein 2 (Lrch2) from Mus musculus (Mouse).